A 156-amino-acid chain; its full sequence is Small ribosomal subunit protein uS7 (156 aa).

The protein belongs to the universal ribosomal protein uS7 family. Part of the 30S ribosomal subunit. Contacts proteins S9 and S11.

Functionally, one of the primary rRNA binding proteins, it binds directly to 16S rRNA where it nucleates assembly of the head domain of the 30S subunit. Is located at the subunit interface close to the decoding center, probably blocks exit of the E-site tRNA. The protein is Small ribosomal subunit protein uS7 of Chlorobaculum tepidum (strain ATCC 49652 / DSM 12025 / NBRC 103806 / TLS) (Chlorobium tepidum).